The following is a 178-amino-acid chain: ATP-dependent protease subunit HslV (178 aa).

Residue Thr-7 is part of the active site. Na(+) is bound by residues Gly-162, Cys-165, and Thr-168.

Belongs to the peptidase T1B family. HslV subfamily. In terms of assembly, a double ring-shaped homohexamer of HslV is capped on each side by a ring-shaped HslU homohexamer. The assembly of the HslU/HslV complex is dependent on binding of ATP.

Its subcellular location is the cytoplasm. The enzyme catalyses ATP-dependent cleavage of peptide bonds with broad specificity.. With respect to regulation, allosterically activated by HslU binding. In terms of biological role, protease subunit of a proteasome-like degradation complex believed to be a general protein degrading machinery. This is ATP-dependent protease subunit HslV from Leptothrix cholodnii (strain ATCC 51168 / LMG 8142 / SP-6) (Leptothrix discophora (strain SP-6)).